A 547-amino-acid polypeptide reads, in one-letter code: (R)-citramalate synthase (547 aa).

Residues 8–278 enclose the Pyruvate carboxyltransferase domain; sequence LWLYDTTLRD…YDCIEPEKLA (271 aa).

It belongs to the alpha-IPM synthase/homocitrate synthase family.

The catalysed reaction is pyruvate + acetyl-CoA + H2O = (3R)-citramalate + CoA + H(+). It functions in the pathway amino-acid biosynthesis; L-isoleucine biosynthesis; 2-oxobutanoate from pyruvate: step 1/3. Functionally, catalyzes the condensation of pyruvate and acetyl-coenzyme A to form (R)-citramalate. This Synechocystis sp. (strain ATCC 27184 / PCC 6803 / Kazusa) protein is (R)-citramalate synthase.